The sequence spans 116 residues: Large ribosomal subunit protein bL20c (116 aa).

Belongs to the bacterial ribosomal protein bL20 family.

The protein resides in the plastid. Its subcellular location is the chloroplast. Functionally, binds directly to 23S ribosomal RNA and is necessary for the in vitro assembly process of the 50S ribosomal subunit. It is not involved in the protein synthesizing functions of that subunit. This chain is Large ribosomal subunit protein bL20c, found in Cryptomeria japonica (Japanese cedar).